Consider the following 554-residue polypeptide: uncharacterized protein (554 aa).

This is an uncharacterized protein from Saccharomyces cerevisiae (strain ATCC 204508 / S288c) (Baker's yeast).